We begin with the raw amino-acid sequence, 379 residues long: MTISDVPTQTLPAEGEIGLIDVGSLQLESGAVIDDVCIAVQRWGKLSPARDNVVVVLHALTGDSHITGPAGPGHPTPGWWDGVAGPGAPIDTTRWCAVATNVLGGCRGSTGPSSLARDGKPWGSRFPLISIRDQVQADVAALAALGITEVAAVVGGSMGGARALEWVVGYPDRVRAGLLLAVGARATADQIGTQTTQIAAIKADPDWQSGDYHETGRAPDAGLRLARRFAHLTYRGEIELDTRFANHNQGNEDPTAGGRYAVQSYLEHQGDKLLSRFDAGSYVILTEALNSHDVGRGRGGVSAALRACPVPVVVGGITSDRLYPLRLQQELADLLPGCAGLRVVESVYGHDGFLVETEAVGELIRQTLGLADREGACRR.

Positions 52 to 356 (NVVVVLHALT…VYGHDGFLVE (305 aa)) constitute an AB hydrolase-1 domain. Ser157 acts as the Nucleophile in catalysis. Arg227 contributes to the substrate binding site. Active-site residues include Asp320 and His350. A substrate-binding site is contributed by Asp351.

It belongs to the AB hydrolase superfamily. MetX family. As to quaternary structure, homodimer.

Its subcellular location is the cytoplasm. The catalysed reaction is L-homoserine + acetyl-CoA = O-acetyl-L-homoserine + CoA. It functions in the pathway amino-acid biosynthesis; L-methionine biosynthesis via de novo pathway; O-acetyl-L-homoserine from L-homoserine: step 1/1. In terms of biological role, transfers an acetyl group from acetyl-CoA to L-homoserine, forming acetyl-L-homoserine. This is Homoserine O-acetyltransferase from Mycobacterium bovis (strain ATCC BAA-935 / AF2122/97).